A 445-amino-acid polypeptide reads, in one-letter code: Glucose-6-phosphate isomerase 2 (445 aa).

Glu285 functions as the Proton donor in the catalytic mechanism. Residues His306 and Lys420 contribute to the active site.

It belongs to the GPI family. Homodimer.

The protein localises to the cytoplasm. It catalyses the reaction alpha-D-glucose 6-phosphate = beta-D-fructose 6-phosphate. The protein operates within carbohydrate biosynthesis; gluconeogenesis. It participates in carbohydrate degradation; glycolysis; D-glyceraldehyde 3-phosphate and glycerone phosphate from D-glucose: step 2/4. Catalyzes the reversible isomerization of glucose-6-phosphate to fructose-6-phosphate. This Geobacillus stearothermophilus (Bacillus stearothermophilus) protein is Glucose-6-phosphate isomerase 2.